Here is a 239-residue protein sequence, read N- to C-terminus: Uridylate kinase (239 aa).

13 to 16 (KVSG) is a binding site for ATP. G55 lines the UMP pocket. The ATP site is built by G56 and R60. UMP-binding positions include D75 and 136-143 (TGNPFFTT). Residues T163, Q164, Y169, and D172 each contribute to the ATP site.

It belongs to the UMP kinase family. As to quaternary structure, homohexamer.

The protein localises to the cytoplasm. The catalysed reaction is UMP + ATP = UDP + ADP. Its pathway is pyrimidine metabolism; CTP biosynthesis via de novo pathway; UDP from UMP (UMPK route): step 1/1. With respect to regulation, inhibited by UTP. Its function is as follows. Catalyzes the reversible phosphorylation of UMP to UDP. This chain is Uridylate kinase, found in Bartonella quintana (strain Toulouse) (Rochalimaea quintana).